Consider the following 182-residue polypeptide: Late embryogenesis abundant protein 3 (182 aa).

The interval 1 to 51 is disordered; that stretch reads MAQHQHSPQRPRDQDNTRPHDQYGIVFSVSGDDVARKQGDSFSQPDPTVAT. The short motif at 7-11 is the Nuclear localization signal (NLS) element; the sequence is SPQRP. A compositionally biased stretch (basic and acidic residues) spans 10-21; it reads RPRDQDNTRPHD. SMP domains follow at residues 58–115 and 123–181; these read VTIG…TNEQ and VNIA…LNQQ. Positions 145 to 182 are disordered; sequence EDAEAVVGAELRSSSEMKTTPGGVADSMSAGARLNQQL.

It belongs to the LEA type SMP family.

The protein resides in the cytoplasm. The protein localises to the nucleus. LEA proteins are late embryonic proteins abundant in higher plant seed embryos. The function of those proteins is not known. This is Late embryogenesis abundant protein 3 from Arabidopsis thaliana (Mouse-ear cress).